Reading from the N-terminus, the 2212-residue chain is COPII coat assembly protein SEC16 (2212 aa).

2 stretches are compositionally biased toward polar residues: residues 1–12 (MSIRKSTTSPVS) and 183–200 (ENSASPQEVDSKQTSSTI). 14 disordered regions span residues 1–31 (MSIRKSTTSPVSGTDRADLNDSFAVSEAEPS), 173–343 (IYGE…QQEV), 355–451 (RESS…HDYS), 480–563 (GFFT…PVEP), 626–666 (KVKP…PPVS), 705–849 (AAPV…APPI), 861–948 (SATS…SNPN), 1380–1400 (EEPKSKSGENGVFSKFSPSVS), 1416–1446 (NKYPHSSPQMPSGQFGSSSIAPSTADGVSVP), 1484–1542 (SFSV…VPPV), 1572–1593 (SSIGSHRQHGYHPPTSQTPTVN), 1680–1866 (LSAS…FGYN), 1883–1927 (FDNS…YQGD), and 1960–2212 (SSRL…FDKK). Over residues 246–282 (QPQKVEHVLPWEEKPDEVSQKDEALPWEERRVEHPEQ) the composition is skewed to basic and acidic residues. A compositionally biased stretch (polar residues) spans 430–444 (EQSTKPQDTQPQVSQ). The span at 483 to 497 (TERRPEQESETKQES) shows a compositional bias: basic and acidic residues. Composition is skewed to acidic residues over residues 498-509 (LDELFEKDEDFL) and 533-553 (LDLDDDLLLDDDLLDDDEPEL). Positions 637 to 651 (TTKYSQPVASPNLSN) are enriched in polar residues. Pro residues predominate over residues 654-665 (SAPPATTIPPPV). Polar residues-rich tracts occupy residues 714–731 (PHIQKSPQISNTPISASS), 740–767 (MPSNTQKQNPHSPLQGSQYSFPRKTSSG), and 778–807 (APPSSNQYATVSAQVQPGLPQSSLPQSGMS). Over residues 808–819 (QPGLQPFPQPQG) the composition is skewed to low complexity. Polar residues-rich tracts occupy residues 830–849 (QIQNSPLGQPQQTHNYAPPI) and 909–933 (HSGTSPSIAQSSLTSRNRGISNPRN). Polar residues-rich tracts occupy residues 1416–1437 (NKYPHSSPQMPSGQFGSSSIAP), 1484–1507 (SFSVHSQSTQVPPSHHSTPQQSHV), and 1521–1536 (YSPSNASPQVPDSTAS). Polar residues predominate over residues 1681 to 1699 (SASQEVSGQPSAASTSVPS). Positions 1960–1975 (SSRLSQSQQSALYQQY) are enriched in low complexity. A compositionally biased stretch (acidic residues) spans 1989 to 2001 (VEEDDEEDEDEED). Basic and acidic residues-rich tracts occupy residues 2002–2036 (RDKKRLQEEEEKRAKAASEEAKKKASEAAAKRDPG) and 2065–2080 (YDEKHKRWLDKSRPIE). 2 stretches are compositionally biased toward low complexity: residues 2121–2131 (NPSGVAPTAAP) and 2138–2147 (PSGVTSGPPS). Residues 2195–2205 (RKAKRNTRRGH) are compositionally biased toward basic residues.

This sequence belongs to the SEC16 family.

It is found in the endoplasmic reticulum membrane. Its function is as follows. Involved in the initiation of assembly of the COPII coat required for the formation of transport vesicles from the endoplasmic reticulum (ER) and the selection of cargo molecules. Also involved in autophagy. In Scheffersomyces stipitis (strain ATCC 58785 / CBS 6054 / NBRC 10063 / NRRL Y-11545) (Yeast), this protein is COPII coat assembly protein SEC16 (SEC16).